A 150-amino-acid polypeptide reads, in one-letter code: Deoxyuridine 5'-triphosphate nucleotidohydrolase (150 aa).

Substrate contacts are provided by residues 69–71, Asn82, 86–88, and Met96; these read RSG and LID.

The protein belongs to the dUTPase family. It depends on Mg(2+) as a cofactor.

It carries out the reaction dUTP + H2O = dUMP + diphosphate + H(+). The protein operates within pyrimidine metabolism; dUMP biosynthesis; dUMP from dCTP (dUTP route): step 2/2. Functionally, this enzyme is involved in nucleotide metabolism: it produces dUMP, the immediate precursor of thymidine nucleotides and it decreases the intracellular concentration of dUTP so that uracil cannot be incorporated into DNA. This chain is Deoxyuridine 5'-triphosphate nucleotidohydrolase, found in Acinetobacter baumannii (strain AB307-0294).